We begin with the raw amino-acid sequence, 81 residues long: RNA-binding protein Hfq (81 aa).

The Sm domain maps to Asp-9–Val-68.

It belongs to the Hfq family. As to quaternary structure, homohexamer.

Functionally, RNA chaperone that binds small regulatory RNA (sRNAs) and mRNAs to facilitate mRNA translational regulation in response to envelope stress, environmental stress and changes in metabolite concentrations. Also binds with high specificity to tRNAs. The chain is RNA-binding protein Hfq from Blochmanniella pennsylvanica (strain BPEN).